The chain runs to 156 residues: Small ribosomal subunit protein uS7 (156 aa).

This sequence belongs to the universal ribosomal protein uS7 family. As to quaternary structure, part of the 30S ribosomal subunit. Contacts proteins S9 and S11.

Functionally, one of the primary rRNA binding proteins, it binds directly to 16S rRNA where it nucleates assembly of the head domain of the 30S subunit. Is located at the subunit interface close to the decoding center, probably blocks exit of the E-site tRNA. The polypeptide is Small ribosomal subunit protein uS7 (Campylobacter hominis (strain ATCC BAA-381 / DSM 21671 / CCUG 45161 / LMG 19568 / NCTC 13146 / CH001A)).